A 337-amino-acid chain; its full sequence is Ketol-acid reductoisomerase (NADP(+)) (337 aa).

The 181-residue stretch at 3 to 183 (VEMFYDDDAD…GGARAGVIKT (181 aa)) folds into the KARI N-terminal Rossmann domain. NADP(+)-binding positions include 26 to 29 (YGSQ), Lys-49, Ser-52, Ser-54, and 84 to 87 (DTAQ). The active site involves His-109. Gly-135 lines the NADP(+) pocket. Residues 184–329 (TFKEETETDL…KKLRDLMSWV (146 aa)) form the KARI C-terminal knotted domain. Mg(2+) contacts are provided by Asp-192, Glu-196, Glu-228, and Glu-232. A substrate-binding site is contributed by Ser-253.

The protein belongs to the ketol-acid reductoisomerase family. It depends on Mg(2+) as a cofactor.

It catalyses the reaction (2R)-2,3-dihydroxy-3-methylbutanoate + NADP(+) = (2S)-2-acetolactate + NADPH + H(+). The enzyme catalyses (2R,3R)-2,3-dihydroxy-3-methylpentanoate + NADP(+) = (S)-2-ethyl-2-hydroxy-3-oxobutanoate + NADPH + H(+). It participates in amino-acid biosynthesis; L-isoleucine biosynthesis; L-isoleucine from 2-oxobutanoate: step 2/4. The protein operates within amino-acid biosynthesis; L-valine biosynthesis; L-valine from pyruvate: step 2/4. Involved in the biosynthesis of branched-chain amino acids (BCAA). Catalyzes an alkyl-migration followed by a ketol-acid reduction of (S)-2-acetolactate (S2AL) to yield (R)-2,3-dihydroxy-isovalerate. In the isomerase reaction, S2AL is rearranged via a Mg-dependent methyl migration to produce 3-hydroxy-3-methyl-2-ketobutyrate (HMKB). In the reductase reaction, this 2-ketoacid undergoes a metal-dependent reduction by NADPH to yield (R)-2,3-dihydroxy-isovalerate. In Mycobacterium sp. (strain JLS), this protein is Ketol-acid reductoisomerase (NADP(+)).